The following is a 123-amino-acid chain: VQ motif-containing protein 29 (123 aa).

Residues Thr24–His55 form a disordered region. Positions Ser33–Lys43 are enriched in basic residues. A VQ motif is present at residues Phe66–Gly75. A compositionally biased stretch (basic and acidic residues) spans Pro77–Ala94. A disordered region spans residues Pro77–Trp123. Residues Ser97–Ser108 show a composition bias toward low complexity. Polar residues predominate over residues Trp109–Trp123.

It localises to the nucleus. May function as negative regulator of flowering transition. This is VQ motif-containing protein 29 from Arabidopsis thaliana (Mouse-ear cress).